Consider the following 437-residue polypeptide: Vacuolar cation/proton exchanger 2 (437 aa).

A disordered region spans residues 1 to 29 (MMGAEKAEGMEELELEEGGGSPSPSPMTA). Residues 1 to 65 (MMGAEKAEGM…KWRRALTSVR (65 aa)) lie on the Cytoplasmic side of the membrane. The helical transmembrane segment at 66 to 86 (VVILQAKINVLLPFGPLAVML) threads the bilayer. The Extracellular segment spans residues 87–88 (HY). The helical transmembrane segment at 89–109 (LSANHQGWVFLFSLIGITPLA) threads the bilayer. At 110 to 126 (ERLGYATEQLALYTGPT) the chain is on the cytoplasmic side. A helical membrane pass occupies residues 127–147 (IGGLLNATFGNATEMIISLYA). The tract at residues 136 to 171 (GNATEMIISLYALKNGMIRVVQQSLLGSILSNMLLV) is cation selection. Topologically, residues 148–161 (LKNGMIRVVQQSLL) are extracellular. A helical membrane pass occupies residues 162-182 (GSILSNMLLVLGCAFFAGGLV). Residues 183–194 (HPSRDQVFNKAS) lie on the Cytoplasmic side of the membrane. A helical transmembrane segment spans residues 195-215 (AVVNSGLLLMAVLGLMFPAVL). Over 216–228 (HFTHSEVQYGKSE) the chain is Extracellular. A helical transmembrane segment spans residues 229 to 249 (VSLSRFSSCIMLVAYASYLFF). Over 250-281 (QLKSQRSLYSPIGEQEEEVTEDEEEEKEITQG) the chain is Cytoplasmic. The helical transmembrane segment at 282-302 (EAICWLFVLTIWISILSGYLV) threads the bilayer. At 303 to 310 (DAIQGASE) the chain is on the extracellular side. Residues 311-331 (SLNMPVAFISVILLPIVGNAA) traverse the membrane as a helical segment. The cation selection stretch occupies residues 328 to 363 (GNAAEHASAIMFAMKDKLDITLGVAIGSSTQISMFV). Residues 332–352 (EHASAIMFAMKDKLDITLGVA) lie on the Cytoplasmic side of the membrane. A helical transmembrane segment spans residues 353–373 (IGSSTQISMFVIPFCVVIGWI). At 374 to 379 (MGQQMD) the chain is on the extracellular side. The chain crosses the membrane as a helical span at residues 380–400 (LNFQLFETATLFITVLVVAFM). Over 401-408 (LQEGTSNY) the chain is Cytoplasmic. The helical transmembrane segment at 409-429 (FKGLMLILCYLIVAASFFVHV) threads the bilayer. Residues 430 to 437 (DPDSSNNK) are Extracellular-facing.

It belongs to the Ca(2+):cation antiporter (CaCA) (TC 2.A.19) family. Cation/proton exchanger (CAX) subfamily. In terms of tissue distribution, expressed in roots and shoots.

It localises to the vacuole membrane. In terms of biological role, vacuolar cation/proton exchanger (CAX). Translocates Ca(2+) and other metal ions into vacuoles using the proton gradient formed by H(+)-ATPase and H(+)-pyrophosphatase. The protein is Vacuolar cation/proton exchanger 2 (CAX2) of Oryza sativa subsp. japonica (Rice).